Here is a 117-residue protein sequence, read N- to C-terminus: UPF0321 protein PJ695.01c (117 aa).

The signal sequence occupies residues 1–17 (MLLLLYICCLFLKFILA). N-linked (GlcNAc...) asparagine glycans are attached at residues N39, N65, N71, and N104.

It belongs to the UPF0321 family.

This Schizosaccharomyces pombe (strain 972 / ATCC 24843) (Fission yeast) protein is UPF0321 protein PJ695.01c.